The chain runs to 306 residues: MLPYIVLVLGCWSVLSQAAQTDDEERAGNRRPIWIMGHMVNAIGQIDEFVNLGANSIETDVSFDDNANPEYTYHGIPCDCGRNCKKYENFNDFLKGLRSATTPGNSKYQEKLVLVVFDLKTGSLYDNQANDAGKKLAKNLLQHYWNNGNNGGRAYIVLSIPDLNHYPLIKGFKDQLTKDGHPELMDKVGHDFSGNDDIGDVGKAYKKAGITGHIWQSDGITNCLPRGLSRVNAAVANRDSANGFINKVYYWTVDKRSTTRDALDAGVDGIMTNYPDVITDVLNEAAYKKKFRVATYDENPWVTFKK.

A signal peptide spans 1–18 (MLPYIVLVLGCWSVLSQA). The propeptide occupies 19 to 26 (AQTDDEER). Histidine 38 is an active-site residue. Positions 58 and 60 each coordinate Mg(2+). The active-site Nucleophile is histidine 74. 2 disulfides stabilise this stretch: cysteine 78-cysteine 84 and cysteine 80-cysteine 223. Aspartate 118 contacts Mg(2+).

It belongs to the arthropod phospholipase D family. Class II subfamily. Class IIa sub-subfamily. Requires Mg(2+) as cofactor. Expressed by the venom gland.

It is found in the secreted. It catalyses the reaction an N-(acyl)-sphingosylphosphocholine = an N-(acyl)-sphingosyl-1,3-cyclic phosphate + choline. The enzyme catalyses an N-(acyl)-sphingosylphosphoethanolamine = an N-(acyl)-sphingosyl-1,3-cyclic phosphate + ethanolamine. It carries out the reaction a 1-acyl-sn-glycero-3-phosphocholine = a 1-acyl-sn-glycero-2,3-cyclic phosphate + choline. The catalysed reaction is a 1-acyl-sn-glycero-3-phosphoethanolamine = a 1-acyl-sn-glycero-2,3-cyclic phosphate + ethanolamine. It catalyses the reaction 1-hexadecanoyl-sn-glycero-3-phosphocholine = 1-hexadecanoyl-sn-glycero-2,3-cyclic phosphate + choline. With respect to regulation, catalytic activity and hemolysis are inhibited by divalent ion chelators (1,10-phenanthroline, EDTA, and EGTA). Dermonecrotic toxins cleave the phosphodiester linkage between the phosphate and headgroup of certain phospholipids (sphingolipid and lysolipid substrates), forming an alcohol (often choline) and a cyclic phosphate. This toxin acts on sphingomyelin (SM) with high activity. It discriminate between the number of carbon atoms in the substrates, since it prefers SM with six carbons in the fatty acid chain (SM6:0) to other SMs (SM12:0 &gt; SM16:0 &gt; SM18:0 &gt; SM2:0 &gt; SM24:0). It also acts on lysophosphatidylcholine (LPC) (LPC16:0 = LPC12:0 &gt; LPC18:0), and lyso-platelet activating factor (LPAF, an alkyl-LPC) but not on phosphatidylcholine (PC). It may also act on ceramide phosphoethanolamine (CPE), lysophosphatidylcholine (LPC) and lysophosphatidylethanolamine (LPE), but not on lysophosphatidylserine (LPS), and lysophosphatidylglycerol (LPG). It acts by transphosphatidylation, releasing exclusively cyclic phosphate products as second products. In vivo, it induces dermonecrosis, vascular permeability, platelet aggregation, inflammatory response, edema and cytotoxicity against renal epithelial cells. It causes direct nephrotoxicity and is directly toxic to liver. It also induces hemolysis in a complement-dependent manner as well as in a complement-independent manner. The hemolysis provoked in a complement-independent manner is composed of several steps. The toxin binds to erythrocyte membranes, hydrolyzes membrane phospholipids (SM and LPC) thus generating metabolism products that cause hemolysis, probably by provoking an increase of calcium inside cells. The calcium influx is due to the opening of L-type calcium channels, since L-type calcium channel blockers inhibit calcium influx. Is lethal to mice when intraperitoneally injected. The chain is Dermonecrotic toxin LiSicTox-alphaIA1a from Loxosceles intermedia (Brown spider).